The chain runs to 333 residues: Adenosine deaminase (333 aa).

Zn(2+) is bound by residues His-12 and His-14. Residues His-14, Asp-16, and Gly-170 each coordinate substrate. His-197 serves as a coordination point for Zn(2+). Glu-200 (proton donor) is an active-site residue. Asp-278 is a binding site for Zn(2+). Asp-279 lines the substrate pocket.

Belongs to the metallo-dependent hydrolases superfamily. Adenosine and AMP deaminases family. Adenosine deaminase subfamily. It depends on Zn(2+) as a cofactor.

It catalyses the reaction adenosine + H2O + H(+) = inosine + NH4(+). The enzyme catalyses 2'-deoxyadenosine + H2O + H(+) = 2'-deoxyinosine + NH4(+). Functionally, catalyzes the hydrolytic deamination of adenosine and 2-deoxyadenosine. This is Adenosine deaminase from Shigella sonnei (strain Ss046).